A 2006-amino-acid chain; its full sequence is E3 ubiquitin-protein ligase PRT6 (2006 aa).

Residues 119-189 (GVCGSVWGQN…PDGFCSNHKG (71 aa)) form a UBR-type zinc finger. Disordered regions lie at residues 1167–1186 (LSSS…SDSV) and 1338–1380 (DHQP…AGSD). The segment covering 1338-1348 (DHQPHEAENCS) has biased composition (basic and acidic residues). Residues 1349-1360 (EKNSVGGPSTLQ) are compositionally biased toward polar residues. A compositionally biased stretch (basic and acidic residues) spans 1364–1377 (PDIRSRQTSRRPDA). The segment at 1395–1440 (CGHAVHQSCLERYLKSLKERSGRRTVFEGAHIVDLKKKEFLCPVCR) adopts an RING-type; degenerate zinc-finger fold.

The protein belongs to the E3 ubiquitin-protein ligase UBR1-like family.

The catalysed reaction is S-ubiquitinyl-[E2 ubiquitin-conjugating enzyme]-L-cysteine + [acceptor protein]-L-lysine = [E2 ubiquitin-conjugating enzyme]-L-cysteine + N(6)-ubiquitinyl-[acceptor protein]-L-lysine.. Its pathway is protein modification; protein ubiquitination. Ubiquitin protein ligase which is a component of the N-end rule pathway with arginine specificity, and functions with the arginyltransferases ATE1 and ATE2. Recognizes and binds to proteins bearing specific N-terminal residues that are destabilizing according to the N-end rule, leading to their ubiquitination and subsequent degradation. Does not participate in degradation of proteins with N-terminal Phe or Leu. The N-end rule pathway regulates seed after-ripening, seedling sugar sensitivity, seedling lipid breakdown, and abscisic acid (ABA) sensitivity of germination. The N-end rule pathway regulates various aspects of leaf and shoot development. Involved in the ubiquitination and subsequent degradation of RAP2-12, an activator of hypoxic gene expression. The ubiquitination occurs after the N-arginylation of RAP2-12 by ATE1 or ATE2 under aerobic conditions. The end-rule pathway plays a role in regulating the timing and amplitude of the immune response following infection with the bacterial pathogen Pseudomonas syringae pv tomato. Regulates the biosynthesis of plant-defense metabolites such as glucosinolates, and the biosynthesis and response to the phytohormone jasmonate (JA), which plays a key role in plant immunity. Controls the expression of specific defense-response genes, activates the synthesis pathway for the phytoalexin camalexin, and influences basal resistance to the hemibiotroph pathogen Pseudomonas syringae pv tomato. Coordinates the mobilization of seed storage reserves and regulates the abundance and activities of several proteases following seed germination. This chain is E3 ubiquitin-protein ligase PRT6, found in Arabidopsis thaliana (Mouse-ear cress).